The primary structure comprises 100 residues: Large ribosomal subunit protein uL23 (100 aa).

The protein belongs to the universal ribosomal protein uL23 family. Part of the 50S ribosomal subunit. Contacts protein L29, and trigger factor when it is bound to the ribosome.

One of the early assembly proteins it binds 23S rRNA. One of the proteins that surrounds the polypeptide exit tunnel on the outside of the ribosome. Forms the main docking site for trigger factor binding to the ribosome. The chain is Large ribosomal subunit protein uL23 from Mycolicibacterium smegmatis (strain ATCC 700084 / mc(2)155) (Mycobacterium smegmatis).